Here is a 507-residue protein sequence, read N- to C-terminus: Maturase K (507 aa).

This sequence belongs to the intron maturase 2 family. MatK subfamily.

It is found in the plastid. The protein resides in the chloroplast. In terms of biological role, usually encoded in the trnK tRNA gene intron. Probably assists in splicing its own and other chloroplast group II introns. This Nymphaea alba (White water-lily) protein is Maturase K.